The chain runs to 503 residues: Glutamate--tRNA ligase (503 aa).

A 'HIGH' region motif is present at residues 26 to 36; sequence PSPTGTPHVGL. A disordered region spans residues 126 to 148; the sequence is TPEEVEARHRAAGRDPKLGYDNA. The span at 130-148 shows a compositional bias: basic and acidic residues; sequence VEARHRAAGRDPKLGYDNA. Residues 270 to 274 carry the 'KMSKS' region motif; it reads KLSKR. Residue K273 coordinates ATP.

It belongs to the class-I aminoacyl-tRNA synthetase family. Glutamate--tRNA ligase type 1 subfamily. Monomer.

The protein localises to the cytoplasm. It catalyses the reaction tRNA(Glu) + L-glutamate + ATP = L-glutamyl-tRNA(Glu) + AMP + diphosphate. Its function is as follows. Catalyzes the attachment of glutamate to tRNA(Glu) in a two-step reaction: glutamate is first activated by ATP to form Glu-AMP and then transferred to the acceptor end of tRNA(Glu). This Saccharopolyspora erythraea (strain ATCC 11635 / DSM 40517 / JCM 4748 / NBRC 13426 / NCIMB 8594 / NRRL 2338) protein is Glutamate--tRNA ligase.